The following is a 246-amino-acid chain: Protein phosphatase PhpP (246 aa).

The 239-residue stretch at 2–240 (EISLLTDVGQ…DNITVALVSM (239 aa)) folds into the PPM-type phosphatase domain. Positions 36, 37, 192, and 231 each coordinate Mn(2+).

The protein belongs to the PP2C family. In terms of assembly, interacts with the kinase domain of StkP. The cofactor is Mn(2+).

The protein resides in the cytoplasm. It catalyses the reaction O-phospho-L-seryl-[protein] + H2O = L-seryl-[protein] + phosphate. The catalysed reaction is O-phospho-L-threonyl-[protein] + H2O = L-threonyl-[protein] + phosphate. With respect to regulation, phosphatase activity is inhibited by NaF but not by okadaic acid. Protein phosphatase able to dephosphorylate StkP-P and a phosphothreonine residue in a phosphopeptide synthetic substrate. PhpP and its cognate protein kinase StkP appear to constitute a functional signaling couple in vivo, PhpP's primary role probably being to control phosphorylation levels of StkP and of its targets (which include LocZ, DivIVA and KhpB (also called EloR/Jag)). PhpP thus performs an essential control of StkP activity. Overexpression confers an stkP deletion-like phenotype. This Streptococcus pneumoniae protein is Protein phosphatase PhpP (phpP).